The sequence spans 2319 residues: A-kinase anchor protein 6 (2319 aa).

2 stretches are compositionally biased toward polar residues: residues 1-12 and 324-339; these read MLTMSVTLSPLR and GVSS…AAQP. 5 disordered regions span residues 1 to 24, 301 to 369, 493 to 532, 566 to 614, and 691 to 757; these read MLTM…TDAS, VDDK…NATP, SRLK…VPNG, LQLQ…PSHV, and TRLG…SATK. Residues 340–351 show a composition bias toward low complexity; sequence SSETVQQESSSS. Polar residues-rich tracts occupy residues 518-532 and 566-591; these read GKQA…VPNG and LQLQ…SDNI. Residues 697 to 711 show a composition bias toward low complexity; that stretch reads SPSSSSDIASSLGES. The segment covering 735 to 754 has biased composition (basic and acidic residues); that stretch reads KYADEKSERASSSEKNESHS. Spectrin repeat units lie at residues 762-848 and 1036-1150; these read QKLM…QLLE and EKVD…LLDD. A Phosphoserine modification is found at Ser1073. A disordered region spans residues 1250-1272; the sequence is KLGETSNEDPGYDEEADNHGGSQ. Residues 1255 to 1265 are compositionally biased toward acidic residues; sequence SNEDPGYDEEA. Ser1570 and Ser1595 each carry phosphoserine. Disordered regions lie at residues 1821–1842, 1900–1925, and 1963–1983; these read VSDE…PSDT, EGIP…SHGK, and KCPN…TEKS. Composition is skewed to polar residues over residues 1830-1842, 1911-1920, and 1972-1982; these read DISS…PSDT, NVTSKVSENL, and NQSTASTPTEK. The tract at residues 2063–2076 is PKA-RII subunit binding domain; the sequence is IIDMASTALKSKSQ. The span at 2198-2215 shows a compositional bias: low complexity; the sequence is FSDSSLSADDADTVALSS. The disordered stretch occupies residues 2198–2319; the sequence is FSDSSLSADD…HEKRHRNMHR (122 aa).

In terms of assembly, interacts with RII subunit of PKA, phosphatase 2B (calcineurin) and AKAP79. Interacts with SYNPO2. Highly expressed in cardiac and skeletal muscle, followed by brain.

It localises to the sarcoplasmic reticulum. The protein resides in the nucleus membrane. Its function is as follows. Binds to type II regulatory subunits of protein kinase A and anchors/targets them to the nuclear membrane or sarcoplasmic reticulum. May act as an adapter for assembling multiprotein complexes. This chain is A-kinase anchor protein 6 (AKAP6), found in Homo sapiens (Human).